The primary structure comprises 201 residues: Holliday junction branch migration complex subunit RuvA (201 aa).

The interval 1–64 is domain I; the sequence is MIGRLHGKII…EDAHLLFGFA (64 aa). The tract at residues 65–143 is domain II; it reads QKQDRTLFRE…GVAQSDFFEE (79 aa). The flexible linker stretch occupies residues 144–154; the sequence is HSVETIVATHS. The interval 154-201 is domain III; the sequence is SHDPADEARDALVALGYKLADAEKMIKKVNKAGATSEQLIREALKASL.

Belongs to the RuvA family. As to quaternary structure, homotetramer. Forms an RuvA(8)-RuvB(12)-Holliday junction (HJ) complex. HJ DNA is sandwiched between 2 RuvA tetramers; dsDNA enters through RuvA and exits via RuvB. An RuvB hexamer assembles on each DNA strand where it exits the tetramer. Each RuvB hexamer is contacted by two RuvA subunits (via domain III) on 2 adjacent RuvB subunits; this complex drives branch migration. In the full resolvosome a probable DNA-RuvA(4)-RuvB(12)-RuvC(2) complex forms which resolves the HJ.

The protein resides in the cytoplasm. Its function is as follows. The RuvA-RuvB-RuvC complex processes Holliday junction (HJ) DNA during genetic recombination and DNA repair, while the RuvA-RuvB complex plays an important role in the rescue of blocked DNA replication forks via replication fork reversal (RFR). RuvA specifically binds to HJ cruciform DNA, conferring on it an open structure. The RuvB hexamer acts as an ATP-dependent pump, pulling dsDNA into and through the RuvAB complex. HJ branch migration allows RuvC to scan DNA until it finds its consensus sequence, where it cleaves and resolves the cruciform DNA. The protein is Holliday junction branch migration complex subunit RuvA of Actinobacillus pleuropneumoniae serotype 5b (strain L20).